We begin with the raw amino-acid sequence, 1076 residues long: Vacuolar membrane protease (1076 aa).

At 1 to 11 (MKCYNPSAFVP) the chain is on the cytoplasmic side. A helical membrane pass occupies residues 12-32 (MAVTLVTVVIYLGVFIPLLII). Residues 33–437 (HETVPSAPDD…TVFAVFRLRT (405 aa)) are Vacuolar-facing. N-linked (GlcNAc...) asparagine glycans are attached at residues asparagine 50, asparagine 99, and asparagine 156. Histidine 220 and aspartate 232 together coordinate Zn(2+). Catalysis depends on glutamate 266, which acts as the Proton acceptor. Zn(2+) contacts are provided by glutamate 267, glutamate 292, and histidine 364. Residues 438–458 (LFAWSLTLLIASPLILFAVSY) traverse the membrane as a helical segment. At 459–491 (LLNRQEKFYFFAGSIKSKNPEDEPISLGGWRGA) the chain is on the cytoplasmic side. Residues 492 to 512 (FRFPITLFITSAITFACASLI) form a helical membrane-spanning segment. Over 513–525 (NKINPMIIYSSPY) the chain is Vacuolar. Residues 526 to 546 (AVWSMSATLFFSVFWFIMAGC) traverse the membrane as a helical segment. Residues 547-556 (NFVRPSALQR) lie on the Cytoplasmic side of the membrane. A helical transmembrane segment spans residues 557–577 (GYAFMWMFVFGWILLVVATVY). The Vacuolar portion of the chain corresponds to 578 to 584 (EDRFKIS). Residues 585 to 605 (GGYLFVFYEAAIFLATLIAIC) form a helical membrane-spanning segment. The Cytoplasmic segment spans residues 606–738 (EQFALPRKST…LPIWTWLVQY (133 aa)). Disordered regions lie at residues 619–662 (DSQN…EETV) and 701–720 (SYDG…HPYG). A compositionally biased stretch (basic and acidic residues) spans 621 to 632 (QNDHSDNQDHHH). Residues 647–660 (PNADDEAAEEDQEE) are compositionally biased toward acidic residues. A helical transmembrane segment spans residues 739-759 (LLVGPFILVILGQVGLFLVAA). Residues 760–771 (LHQTGTDGSPLF) lie on the Vacuolar side of the membrane. The helical transmembrane segment at 772-792 (LPYLIVAIFSILLLLPVTPFI) threads the bilayer. Over 793–799 (HRLTHHM) the chain is Cytoplasmic. Residues 800–820 (PTFFFLVFIGTLIYNLVAFPF) form a helical membrane-spanning segment. Residues 821–1076 (SPNNRYKAYF…LGLAFLLAYV (256 aa)) are Vacuolar-facing. Residue asparagine 912 is glycosylated (N-linked (GlcNAc...) asparagine).

This sequence belongs to the peptidase M28 family. Zn(2+) is required as a cofactor.

The protein resides in the vacuole membrane. Functionally, may be involved in vacuolar sorting and osmoregulation. This Sclerotinia sclerotiorum (strain ATCC 18683 / 1980 / Ss-1) (White mold) protein is Vacuolar membrane protease.